A 192-amino-acid polypeptide reads, in one-letter code: HTH-type transcriptional regulator Hpr (192 aa).

Residues 12 to 156 (SIIFSHKFAQ…LLSIVRHVYG (145 aa)) enclose the HTH marR-type domain. The H-T-H motif DNA-binding region spans 62 to 85 (ISDIAKFGVMHVSTAFNFSKKLEE).

As to quaternary structure, homodimer.

Its function is as follows. Negative regulator of protease production and sporulation. The chain is HTH-type transcriptional regulator Hpr from Halalkalibacterium halodurans (strain ATCC BAA-125 / DSM 18197 / FERM 7344 / JCM 9153 / C-125) (Bacillus halodurans).